The chain runs to 535 residues: Zinc finger protein squeeze (535 aa).

Low complexity-rich tracts occupy residues 70–97 and 131–142; these read MVME…HPPQ and SSASGSGSNGSS. Residues 70–157 are disordered; sequence MVMEQQPHPD…RRGDGDQAKP (88 aa). Positions 145–156 are enriched in basic and acidic residues; it reads EESRRGDGDQAK. 5 C2H2-type zinc fingers span residues 158–180, 186–208, 214–238, 244–266, and 275–297; these read YKCG…TRIH, YRCE…IRTH, YKCR…SRCH, FKCN…IPKH, and HICN…LQKH. T395 bears the Phosphothreonine mark. Residues S399 and S401 each carry the phosphoserine modification. Positions 417-475 are disordered; the sequence is TPQHHLQQQQQQQQQQQAQQQQQAQHQPSPGPGNSAFTPLSATVAPPPHLQQHRGPPGS. A compositionally biased stretch (low complexity) spans 419–443; the sequence is QHHLQQQQQQQQQQQAQQQQQAQHQ. S475 bears the Phosphoserine mark. A phosphotyrosine mark is found at Y479 and Y481.

The protein belongs to the krueppel C2H2-type zinc-finger protein family. As to quaternary structure, interacts with nab; which acts as a coactivator. Interacts with ap. As to expression, largely restricted to subsets of cells in the CNS throughout embryonic and first instar larval (L1) development. Expressed in a population of lateral interneurons, primarily projecting axons in the anterior and posterior commissures. Overlaps with ap within the thoracic ap cluster. By stage 17, it is restricted to 2 neurons within the ap-cluster, with one neuron typically continuing to display higher levels of expression. Selectively expressed at higher levels within the FMRFa Tv neurons. Expressed in all leucokinergic cells.

It localises to the nucleus. Transcription factor involved in neuronal fate specification. First required in embryonic CNS development to define the number of cells that express apterous (ap) in the ap thoracic cluster of interneurons. Later on, it plays a central role in the combinatorial code of transcription factors that specifies the fate of the Tv neuron in the ap cluster by participating in the transcription regulation of FMRFa in Tv cells. Also required for projection neuron dendritic targeting. The sequence is that of Zinc finger protein squeeze (sqz) from Drosophila melanogaster (Fruit fly).